The primary structure comprises 67 residues: MAVPKRKMSRSNTRARRAKWKATAPHLAKTVENGRVTYSLPHQAKVVTDSAGTALFLEYKGRKVADV.

The segment covering 1-20 (MAVPKRKMSRSNTRARRAKW) has biased composition (basic residues). A disordered region spans residues 1-24 (MAVPKRKMSRSNTRARRAKWKATA).

It belongs to the bacterial ribosomal protein bL32 family.

The polypeptide is Large ribosomal subunit protein bL32 (Renibacterium salmoninarum (strain ATCC 33209 / DSM 20767 / JCM 11484 / NBRC 15589 / NCIMB 2235)).